Here is a 479-residue protein sequence, read N- to C-terminus: UDP-glycosyltransferase 84A3 (479 aa).

H19 functions as the Proton acceptor in the catalytic mechanism. Position 19 (H19) interacts with an anthocyanidin. The UDP-alpha-D-glucose site is built by Q346, H361, W364, N365, S366, and E369. G384 provides a ligand contact to an anthocyanidin. D385 and Q386 together coordinate UDP-alpha-D-glucose.

The protein belongs to the UDP-glycosyltransferase family.

The catalysed reaction is (E)-4-coumarate + UDP-alpha-D-glucose = 4-O-(beta-D-glucosyl)-trans-4-coumarate + UDP + H(+). It carries out the reaction (E)-ferulate + UDP-alpha-D-glucose = 1-O-[(E)-feruloyl]-beta-D-glucose + UDP. It catalyses the reaction (E)-caffeate + UDP-alpha-D-glucose = 1-O-[(E)-caffeoyl]-beta-D-glucose + UDP. The enzyme catalyses (E)-sinapate + UDP-alpha-D-glucose = 1-O-(trans-sinapoyl)-beta-D-glucose + UDP. The catalysed reaction is (E)-cinnamate + UDP-alpha-D-glucose = 1-O-(trans-cinnamoyl)-beta-D-glucose + UDP. In terms of biological role, UDP-glucosyltransferase that forms glucose esters with phenylpropanoids. Glucosylates 4-coumarate, ferulate, caffeate, sinapate and cinnamate. The sequence is that of UDP-glycosyltransferase 84A3 from Arabidopsis thaliana (Mouse-ear cress).